The sequence spans 620 residues: 1-deoxy-D-xylulose-5-phosphate synthase (620 aa).

Thiamine diphosphate contacts are provided by residues His80 and 121–123 (GHS). Asp152 lines the Mg(2+) pocket. Residues 153-154 (GA), Asn181, Tyr288, and Glu370 contribute to the thiamine diphosphate site. Asn181 contacts Mg(2+).

It belongs to the transketolase family. DXPS subfamily. Homodimer. Requires Mg(2+) as cofactor. The cofactor is thiamine diphosphate.

It catalyses the reaction D-glyceraldehyde 3-phosphate + pyruvate + H(+) = 1-deoxy-D-xylulose 5-phosphate + CO2. It functions in the pathway metabolic intermediate biosynthesis; 1-deoxy-D-xylulose 5-phosphate biosynthesis; 1-deoxy-D-xylulose 5-phosphate from D-glyceraldehyde 3-phosphate and pyruvate: step 1/1. In terms of biological role, catalyzes the acyloin condensation reaction between C atoms 2 and 3 of pyruvate and glyceraldehyde 3-phosphate to yield 1-deoxy-D-xylulose-5-phosphate (DXP). In Shigella flexneri, this protein is 1-deoxy-D-xylulose-5-phosphate synthase.